A 339-amino-acid polypeptide reads, in one-letter code: Protein FAM131B (339 aa).

Residues 1–22 form a disordered region; the sequence is MDSTSSLHGSSLHRPSTEQTRT. A phosphoserine mark is found at Ser-47, Ser-114, and Ser-117. Residues 222 to 339 are disordered; it reads GPAFGDSQPS…PLLTQPSTPA (118 aa). Composition is skewed to polar residues over residues 239–250 and 324–339; these read QPASGYSAQEPS and PTTS…STPA. Thr-325 bears the Phosphothreonine mark. Residue Ser-327 is modified to Phosphoserine.

It belongs to the FAM131 family.

This Bos taurus (Bovine) protein is Protein FAM131B (FAM131B).